Here is a 188-residue protein sequence, read N- to C-terminus: Mitochondrial import inner membrane translocase subunit TIM23-2 (188 aa).

The next 4 helical transmembrane spans lie at 64 to 84, 112 to 131, 138 to 154, and 161 to 178; these read TGTAYLGGSVAGASVGVITGV, GNRIGIIGLVYAGIESGIVA, VWTSVVAGLGTGAVCRA, and AAVAGALGGLAAGAVVAG.

Belongs to the Tim17/Tim22/Tim23 family. As to quaternary structure, homomultimer. Component of the TIM17:23 complex at least composed of TIM23, TIM17 and TIM50. The complex interacts with the TIM44 component of the PAM complex. Also part of the NADH-ubiquinone oxidoreductase complex I. Interacts with OEP163, TIM17-2, TIM21, TIM50 and MPPA2. As to expression, expressed in roots and young cotyledons. Detected in leaves and flowers.

The protein resides in the mitochondrion inner membrane. Essential component of the TIM17:23 complex, a complex that mediates the translocation of transit peptide-containing proteins across the mitochondrial inner membrane. Links the inner and outer membranes. This chain is Mitochondrial import inner membrane translocase subunit TIM23-2 (TIM23-2), found in Arabidopsis thaliana (Mouse-ear cress).